The primary structure comprises 250 residues: Putative ABC transporter ATP-binding protein YjkB (250 aa).

Positions 13-245 (ISFRSVRKSY…PQHEAAKEFL (233 aa)) constitute an ABC transporter domain. 49–56 (GPSGSGKS) lines the ATP pocket.

This sequence belongs to the ABC transporter superfamily.

This Bacillus subtilis (strain 168) protein is Putative ABC transporter ATP-binding protein YjkB (yjkB).